Reading from the N-terminus, the 280-residue chain is Ribosomal RNA small subunit methyltransferase A (280 aa).

S-adenosyl-L-methionine-binding residues include Asn28, Leu30, Gly55, Glu77, Asp103, and Asn122.

It belongs to the class I-like SAM-binding methyltransferase superfamily. rRNA adenine N(6)-methyltransferase family. RsmA subfamily.

The protein localises to the cytoplasm. It catalyses the reaction adenosine(1518)/adenosine(1519) in 16S rRNA + 4 S-adenosyl-L-methionine = N(6)-dimethyladenosine(1518)/N(6)-dimethyladenosine(1519) in 16S rRNA + 4 S-adenosyl-L-homocysteine + 4 H(+). Its function is as follows. Specifically dimethylates two adjacent adenosines (A1518 and A1519) in the loop of a conserved hairpin near the 3'-end of 16S rRNA in the 30S particle. May play a critical role in biogenesis of 30S subunits. The chain is Ribosomal RNA small subunit methyltransferase A from Ruegeria sp. (strain TM1040) (Silicibacter sp.).